The sequence spans 192 residues: Adenylate kinase (192 aa).

12–17 (GSGKTT) serves as a coordination point for ATP. The segment at 34 to 63 (STGDLLRAEVASGSELGKTIDSFISKGNLV) is NMP. AMP-binding positions include threonine 35, arginine 40, 61-63 (NLV), 88-91 (GYPR), and glutamine 95. The interval 130 to 136 (GRNRGAD) is LID. Arginine 131 provides a ligand contact to ATP. AMP is bound by residues arginine 133 and arginine 145. Arginine 173 lines the ATP pocket.

This sequence belongs to the adenylate kinase family. Monomer.

Its subcellular location is the cytoplasm. It catalyses the reaction AMP + ATP = 2 ADP. It functions in the pathway purine metabolism; AMP biosynthesis via salvage pathway; AMP from ADP: step 1/1. Functionally, catalyzes the reversible transfer of the terminal phosphate group between ATP and AMP. Plays an important role in cellular energy homeostasis and in adenine nucleotide metabolism. This is Adenylate kinase from Campylobacter jejuni subsp. jejuni serotype O:6 (strain 81116 / NCTC 11828).